The primary structure comprises 288 residues: Ribosomal RNA small subunit methyltransferase A (288 aa).

Residues asparagine 28, leucine 30, glycine 55, glutamate 77, aspartate 103, and asparagine 123 each coordinate S-adenosyl-L-methionine.

The protein belongs to the class I-like SAM-binding methyltransferase superfamily. rRNA adenine N(6)-methyltransferase family. RsmA subfamily.

It is found in the cytoplasm. The catalysed reaction is adenosine(1518)/adenosine(1519) in 16S rRNA + 4 S-adenosyl-L-methionine = N(6)-dimethyladenosine(1518)/N(6)-dimethyladenosine(1519) in 16S rRNA + 4 S-adenosyl-L-homocysteine + 4 H(+). In terms of biological role, specifically dimethylates two adjacent adenosines (A1518 and A1519) in the loop of a conserved hairpin near the 3'-end of 16S rRNA in the 30S particle. May play a critical role in biogenesis of 30S subunits. In Xanthobacter autotrophicus (strain ATCC BAA-1158 / Py2), this protein is Ribosomal RNA small subunit methyltransferase A.